The primary structure comprises 756 residues: Hyperosmolality-gated Ca2+ permeable channel 1.5 (756 aa).

The next 10 membrane-spanning stretches (helical) occupy residues 7–27 (IGVA…AFAI), 101–121 (IYLL…TVMV), 154–174 (SRFW…CFVL), 373–393 (LVIA…IAFV), 425–445 (FLPG…LMLM), 465–485 (YYMF…TALQ), 510–530 (ATFF…GEIL), 574–594 (FILG…ILVF), 628–648 (VVIA…TKKA), and 651–671 (STPL…FCQG). The disordered stretch occupies residues 731–756 (PDKTPDLVATKRGSRRFNSGSAETFT). Polar residues predominate over residues 746 to 756 (RFNSGSAETFT).

The protein belongs to the CSC1 (TC 1.A.17) family.

The protein localises to the membrane. In terms of biological role, acts as an osmosensitive calcium-permeable cation channel. The protein is Hyperosmolality-gated Ca2+ permeable channel 1.5 of Arabidopsis thaliana (Mouse-ear cress).